The sequence spans 871 residues: DNA mismatch repair protein MutS (871 aa).

Position 617 to 624 (617 to 624 (GPNMGGKS)) interacts with ATP.

Belongs to the DNA mismatch repair MutS family.

In terms of biological role, this protein is involved in the repair of mismatches in DNA. It is possible that it carries out the mismatch recognition step. This protein has a weak ATPase activity. The sequence is that of DNA mismatch repair protein MutS from Hydrogenovibrio crunogenus (strain DSM 25203 / XCL-2) (Thiomicrospira crunogena).